The sequence spans 85 residues: Exodeoxyribonuclease 7 small subunit (85 aa).

It belongs to the XseB family. As to quaternary structure, heterooligomer composed of large and small subunits.

The protein resides in the cytoplasm. It catalyses the reaction Exonucleolytic cleavage in either 5'- to 3'- or 3'- to 5'-direction to yield nucleoside 5'-phosphates.. Bidirectionally degrades single-stranded DNA into large acid-insoluble oligonucleotides, which are then degraded further into small acid-soluble oligonucleotides. The protein is Exodeoxyribonuclease 7 small subunit of Alkalilimnicola ehrlichii (strain ATCC BAA-1101 / DSM 17681 / MLHE-1).